A 500-amino-acid polypeptide reads, in one-letter code: Polyamine oxidase 1 (500 aa).

An N-terminal signal peptide occupies residues 1–28 (MSSSPSFGLLAVAALLLALSLAQHGSLA). Residues 42–43 (MS), Glu-63, Arg-71, and 87–88 (NW) contribute to the FAD site. Glu-90 provides a ligand contact to substrate. Asn-105 is a glycosylation site (N-linked (GlcNAc...) asparagine). Glu-198 provides a ligand contact to substrate. Residues Val-265, Tyr-427, and Glu-458 each coordinate FAD. Gly-466 provides a ligand contact to substrate. 467 to 468 (YV) serves as a coordination point for FAD. The cysteines at positions 485 and 491 are disulfide-linked.

Belongs to the flavin monoamine oxidase family. Monomer. Requires FAD as cofactor.

It localises to the secreted. The protein resides in the extracellular space. It is found in the apoplast. The protein localises to the cell wall. The catalysed reaction is spermidine + O2 + H2O = 4-aminobutanal + propane-1,3-diamine + H2O2. It catalyses the reaction N(8)-acetylspermidine + O2 + H2O = 4-acetamidobutanal + propane-1,3-diamine + H2O2. The enzyme catalyses spermine + O2 + H2O = N-(3-aminopropyl)-4-aminobutanal + propane-1,3-diamine + H2O2. It carries out the reaction N(1)-acetylspermine + O2 + H2O = N-(3-acetamidopropyl)-4-aminobutanal + propane-1,3-diamine + H2O2. Its pathway is amine and polyamine degradation; spermine degradation. In terms of biological role, flavoenzyme involved in polyamine back-conversion. Catalyzes the oxidation of the secondary amino group of polyamines, such as spermine, spermidine and their acetyl derivatives. Plays an important role in the regulation of polyamine intracellular concentration. In Zea mays (Maize), this protein is Polyamine oxidase 1.